Consider the following 141-residue polypeptide: Large ribosomal subunit protein uL11 (141 aa).

This sequence belongs to the universal ribosomal protein uL11 family. As to quaternary structure, part of the ribosomal stalk of the 50S ribosomal subunit. Interacts with L10 and the large rRNA to form the base of the stalk. L10 forms an elongated spine to which L12 dimers bind in a sequential fashion forming a multimeric L10(L12)X complex. In terms of processing, one or more lysine residues are methylated.

Functionally, forms part of the ribosomal stalk which helps the ribosome interact with GTP-bound translation factors. This chain is Large ribosomal subunit protein uL11, found in Prosthecochloris aestuarii (strain DSM 271 / SK 413).